The sequence spans 140 residues: Large ribosomal subunit protein uL11 (140 aa).

Belongs to the universal ribosomal protein uL11 family. As to quaternary structure, part of the ribosomal stalk of the 50S ribosomal subunit. Interacts with L10 and the large rRNA to form the base of the stalk. L10 forms an elongated spine to which L12 dimers bind in a sequential fashion forming a multimeric L10(L12)X complex. In terms of processing, one or more lysine residues are methylated.

Functionally, forms part of the ribosomal stalk which helps the ribosome interact with GTP-bound translation factors. This is Large ribosomal subunit protein uL11 from Enterococcus faecalis (strain ATCC 700802 / V583).